A 284-amino-acid chain; its full sequence is Nucleotide-binding protein NMA0948 (284 aa).

Gly-8–Ser-15 provides a ligand contact to ATP. Position 58-61 (Asp-58–Ser-61) interacts with GTP.

This sequence belongs to the RapZ-like family.

Displays ATPase and GTPase activities. This chain is Nucleotide-binding protein NMA0948, found in Neisseria meningitidis serogroup A / serotype 4A (strain DSM 15465 / Z2491).